The sequence spans 708 residues: Leukotoxin translocation ATP-binding protein LktB (708 aa).

The 126-residue stretch at 1 to 126 (MEANHQRNDL…ACYQGQLILV (126 aa)) folds into the Peptidase C39 domain. The ABC transmembrane type-1 domain occupies 155-437 (FLETLIVSIF…LAQLWQDFQQ (283 aa)). 5 consecutive transmembrane segments (helical) span residues 159-179 (LIVS…FQVV), 192-212 (LNII…LSGL), 270-290 (ALTS…MWYY), 296-316 (LVIL…SPIL), and 389-409 (VMVI…LSIG). The ABC transporter domain occupies 469-704 (ISFKNIRFRY…SNGLYSYLHQ (236 aa)). 503 to 510 (GRSGSGKS) provides a ligand contact to ATP.

Belongs to the ABC transporter superfamily. Protein-1 exporter (TC 3.A.1.109) family. As to quaternary structure, homodimer.

The protein resides in the cell inner membrane. The catalysed reaction is ATP + H2O + proteinSide 1 = ADP + phosphate + proteinSide 2.. Part of the ABC transporter complex LktBD involved in leukotoxin export. Transmembrane domains (TMD) form a pore in the inner membrane and the ATP-binding domain (NBD) is responsible for energy generation. The protein is Leukotoxin translocation ATP-binding protein LktB (lktB) of Mannheimia haemolytica (Pasteurella haemolytica).